The following is a 238-amino-acid chain: 1-(5-phosphoribosyl)-5-[(5-phosphoribosylamino)methylideneamino] imidazole-4-carboxamide isomerase (238 aa).

The Proton acceptor role is filled by aspartate 8. The active-site Proton donor is aspartate 129.

The protein belongs to the HisA/HisF family.

It localises to the cytoplasm. It carries out the reaction 1-(5-phospho-beta-D-ribosyl)-5-[(5-phospho-beta-D-ribosylamino)methylideneamino]imidazole-4-carboxamide = 5-[(5-phospho-1-deoxy-D-ribulos-1-ylimino)methylamino]-1-(5-phospho-beta-D-ribosyl)imidazole-4-carboxamide. It participates in amino-acid biosynthesis; L-histidine biosynthesis; L-histidine from 5-phospho-alpha-D-ribose 1-diphosphate: step 4/9. The polypeptide is 1-(5-phosphoribosyl)-5-[(5-phosphoribosylamino)methylideneamino] imidazole-4-carboxamide isomerase (Anaeromyxobacter sp. (strain Fw109-5)).